The sequence spans 237 residues: Large ribosomal subunit protein uL1 (237 aa).

The protein belongs to the universal ribosomal protein uL1 family. In terms of assembly, part of the 50S ribosomal subunit.

Functionally, binds directly to 23S rRNA. The L1 stalk is quite mobile in the ribosome, and is involved in E site tRNA release. Protein L1 is also a translational repressor protein, it controls the translation of the L11 operon by binding to its mRNA. This chain is Large ribosomal subunit protein uL1, found in Leptothrix cholodnii (strain ATCC 51168 / LMG 8142 / SP-6) (Leptothrix discophora (strain SP-6)).